We begin with the raw amino-acid sequence, 296 residues long: Protoheme IX farnesyltransferase (296 aa).

The next 9 membrane-spanning stretches (helical) occupy residues 13–33, 35–55, 84–104, 107–127, 132–152, 162–182, 208–228, 229–249, and 264–284; these read IIFGNLISVVGGFLLAAKGII, YPLFLATLVGVSLVVASGCVF, VTLIYATVLGIAGFVLLYIAA, LAMWLAVMGFVVYVGVYSLYM, VYGTLIGSLSGAAPPVIGYCA, LILLAIFSLWQMPHSYAIAIF, ITLYILAFMIATLMLALVGYA, GYKYLIVAAVVSIWWLGMALR, and FVFSIVAITSLSVMMSIDFSV.

Belongs to the UbiA prenyltransferase family. Protoheme IX farnesyltransferase subfamily.

It localises to the cell inner membrane. It catalyses the reaction heme b + (2E,6E)-farnesyl diphosphate + H2O = Fe(II)-heme o + diphosphate. Its pathway is porphyrin-containing compound metabolism; heme O biosynthesis; heme O from protoheme: step 1/1. Functionally, converts heme B (protoheme IX) to heme O by substitution of the vinyl group on carbon 2 of heme B porphyrin ring with a hydroxyethyl farnesyl side group. This Edwardsiella ictaluri (strain 93-146) protein is Protoheme IX farnesyltransferase.